A 551-amino-acid polypeptide reads, in one-letter code: HTH-type transcriptional regulator SgrR (551 aa).

An HTH marR-type domain is found at 1 to 116 (MPSARLQQQF…LVSHLGRSFR (116 aa)). Positions 26-49 (LNELAALLSCSRRHMRTLLNTMQD) form a DNA-binding region, H-T-H motif. Residues 163–492 (ELEADIAHHW…IDWQADAARW (330 aa)) are solute-binding.

Activates the small RNA gene sgrS under glucose-phosphate stress conditions as well as yfdZ. Represses its own transcription under both stress and non-stress conditions. Might act as a sensor of the intracellular accumulation of phosphoglucose by binding these molecules in its C-terminal solute-binding domain. In Escherichia coli O6:K15:H31 (strain 536 / UPEC), this protein is HTH-type transcriptional regulator SgrR.